The following is a 387-amino-acid chain: Anhydro-N-acetylmuramic acid kinase (387 aa).

17 to 24 contacts ATP; that stretch reads GTSMDGVD.

The protein belongs to the anhydro-N-acetylmuramic acid kinase family.

The enzyme catalyses 1,6-anhydro-N-acetyl-beta-muramate + ATP + H2O = N-acetyl-D-muramate 6-phosphate + ADP + H(+). It functions in the pathway amino-sugar metabolism; 1,6-anhydro-N-acetylmuramate degradation. The protein operates within cell wall biogenesis; peptidoglycan recycling. Catalyzes the specific phosphorylation of 1,6-anhydro-N-acetylmuramic acid (anhMurNAc) with the simultaneous cleavage of the 1,6-anhydro ring, generating MurNAc-6-P. Is required for the utilization of anhMurNAc either imported from the medium or derived from its own cell wall murein, and thus plays a role in cell wall recycling. The protein is Anhydro-N-acetylmuramic acid kinase of Burkholderia pseudomallei (strain K96243).